Here is a 292-residue protein sequence, read N- to C-terminus: Homoserine kinase (292 aa).

An ATP-binding site is contributed by 84 to 94; it reads PLSRGLGSSSA.

This sequence belongs to the GHMP kinase family. Homoserine kinase subfamily.

It localises to the cytoplasm. It catalyses the reaction L-homoserine + ATP = O-phospho-L-homoserine + ADP + H(+). The protein operates within amino-acid biosynthesis; L-threonine biosynthesis; L-threonine from L-aspartate: step 4/5. Functionally, catalyzes the ATP-dependent phosphorylation of L-homoserine to L-homoserine phosphate. The chain is Homoserine kinase from Campylobacter jejuni subsp. jejuni serotype O:23/36 (strain 81-176).